We begin with the raw amino-acid sequence, 390 residues long: RNA binding protein fox-1 homolog 2 (390 aa).

The tract at residues 1–127 (MQNEPLTPGY…STPKRLHVSN (127 aa)) is disordered. 2 stretches are compositionally biased toward polar residues: residues 18 to 28 (SQGNQEPTTTP) and 65 to 95 (GEHN…SLTT). His67 is modified (phosphothreonine). Low complexity predominate over residues 97 to 117 (GGAQTDGQQSQTQSSENSESK). In terms of domain architecture, RRM spans 121–197 (KRLHVSNIPF…RKIEVNNATA (77 aa)). 5 positions are modified to omega-N-methylarginine: Gly249, Gly267, Phe268, Ala277, and Arg281. An asymmetric dimethylarginine mark is found at Arg297 and Arg329. An asymmetric dimethylarginine; alternate mark is found at Arg381 and Arg386. 2 positions are modified to omega-N-methylarginine; alternate: Arg381 and Arg386.

In terms of assembly, interacts with ER-alpha N-terminal activation domain. Interacts with RBPMS; the interaction allows cooperative assembly of stable cell-specific alternative splicing regulatory complexes.

The protein resides in the nucleus. The protein localises to the cytoplasm. RNA-binding protein that regulates alternative splicing events by binding to 5'-UGCAUGU-3' elements. Prevents binding of U2AF2 to the 3'-splice site. Regulates alternative splicing of tissue-specific exons and of differentially spliced exons during erythropoiesis. RNA-binding protein that seems to act as a coregulatory factor of ER-alpha. Together with RNA binding proteins RBPMS and MBNL1/2, activates vascular smooth muscle cells alternative splicing events. The sequence is that of RNA binding protein fox-1 homolog 2 (RBFOX2) from Homo sapiens (Human).